We begin with the raw amino-acid sequence, 529 residues long: Extracellular signal-regulated kinase 1 (529 aa).

Disordered regions lie at residues 1 to 20 (MEPEFDHFQSQMDSDNTHQS) and 100 to 131 (QQNQQQQSQQMTQQQLQQLMPPPPTSDTSNFN). Residues 8-20 (FQSQMDSDNTHQS) are compositionally biased toward polar residues. Over residues 100–117 (QQNQQQQSQQMTQQQLQQ) the composition is skewed to low complexity. A Protein kinase domain is found at 149 to 439 (YSIVKCIGHG…EALAHPYFQS (291 aa)). Residues 155–163 (IGHGAYGVV) and Lys-178 each bind ATP. Catalysis depends on Asp-275, which acts as the Proton acceptor. At Thr-309 the chain carries Phosphothreonine. Positions 309 to 311 (TEY) match the TXY motif. At Tyr-311 the chain carries Phosphotyrosine.

The protein belongs to the protein kinase superfamily. CMGC Ser/Thr protein kinase family. MAP kinase subfamily. Mg(2+) is required as a cofactor. Dually phosphorylated on Thr-309 and Tyr-311, which activates the enzyme.

It catalyses the reaction L-seryl-[protein] + ATP = O-phospho-L-seryl-[protein] + ADP + H(+). The catalysed reaction is L-threonyl-[protein] + ATP = O-phospho-L-threonyl-[protein] + ADP + H(+). With respect to regulation, activated by tyrosine and threonine phosphorylation. In terms of biological role, kinase involved in a signal transduction pathway. The polypeptide is Extracellular signal-regulated kinase 1 (erkA) (Dictyostelium discoideum (Social amoeba)).